The following is a 286-amino-acid chain: Protease HtpX homolog (286 aa).

2 consecutive transmembrane segments (helical) span residues 7-27 and 29-49; these read TFML…MIGG and SGMM…YWFS. His-131 contributes to the Zn(2+) binding site. The active site involves Glu-132. His-135 lines the Zn(2+) pocket. Transmembrane regions (helical) follow at residues 146 to 166 and 177 to 197; these read ISAT…FFGG and IAGI…QMAI. Glu-202 contributes to the Zn(2+) binding site.

This sequence belongs to the peptidase M48B family. It depends on Zn(2+) as a cofactor.

It localises to the cell inner membrane. The protein is Protease HtpX homolog of Ralstonia pickettii (strain 12J).